The primary structure comprises 685 residues: ATP-dependent permease MDL1 (685 aa).

Residues F48–S70 show a composition bias toward polar residues. Positions F48–R76 are disordered. N-linked (GlcNAc...) asparagine glycosylation occurs at N63. Residues L96 to L116 traverse the membrane as a helical segment. In terms of domain architecture, ABC transmembrane type-1 spans I97–K407. The disordered stretch occupies residues T125–D147. Over residues D129–D141 the composition is skewed to acidic residues. A helical membrane pass occupies residues F158–L180. An N-linked (GlcNAc...) asparagine glycan is attached at N239. The helical transmembrane segment at L266–Y282 threads the bilayer. N-linked (GlcNAc...) asparagine glycosylation occurs at N336. 2 helical membrane-spanning segments follow: residues G353 to A373 and L381 to F401. In terms of domain architecture, ABC transporter spans I440–K680. An ATP-binding site is contributed by G475–S482. Residues N553 and N576 are each glycosylated (N-linked (GlcNAc...) asparagine).

It belongs to the ABC transporter superfamily. ABCB family. Mitochondrial peptide exporter (TC 3.A.1.212) subfamily.

The protein localises to the membrane. The polypeptide is ATP-dependent permease MDL1 (MDL1) (Candida albicans (Yeast)).